The following is a 338-amino-acid chain: RNA 3'-terminal phosphate cyclase (338 aa).

Residues Q103 and 283–287 each bind ATP; that span reads YLADQ. H308 acts as the Tele-AMP-histidine intermediate in catalysis.

It belongs to the RNA 3'-terminal cyclase family. Type 1 subfamily.

The protein resides in the cytoplasm. The enzyme catalyses a 3'-end 3'-phospho-ribonucleotide-RNA + ATP = a 3'-end 2',3'-cyclophospho-ribonucleotide-RNA + AMP + diphosphate. Functionally, catalyzes the conversion of 3'-phosphate to a 2',3'-cyclic phosphodiester at the end of RNA. The mechanism of action of the enzyme occurs in 3 steps: (A) adenylation of the enzyme by ATP; (B) transfer of adenylate to an RNA-N3'P to produce RNA-N3'PP5'A; (C) and attack of the adjacent 2'-hydroxyl on the 3'-phosphorus in the diester linkage to produce the cyclic end product. The biological role of this enzyme is unknown but it is likely to function in some aspects of cellular RNA processing. This Shigella sonnei (strain Ss046) protein is RNA 3'-terminal phosphate cyclase.